A 213-amino-acid chain; its full sequence is MDSVKIINAVKEARNSAKPRNFTQSVDLIINLKELDLSRPENRMKQQIVLPSGLGKEINIAVIAKGDLAAQAESMGLTVIRQEELEELGKNKKQAKKLANANQFFIAQADMMPIVGKSLGAVLGPRGKMPQPVPANANLKPLVERFGKTISINTRDKAFFQVYVGKESMSDEELAANIEAVLNTVARKYEKGLYHVKNAFTKLTMGASAPIEK.

It belongs to the universal ribosomal protein uL1 family. As to quaternary structure, part of the 50S ribosomal subunit.

Binds directly to 23S rRNA. Probably involved in E site tRNA release. In terms of biological role, protein L1 is also a translational repressor protein, it controls the translation of its operon by binding to its mRNA. The chain is Large ribosomal subunit protein uL1 from Methanococcus voltae.